The primary structure comprises 284 residues: Probable plastid-lipid-associated protein 10, chloroplastic (284 aa).

A chloroplast-targeting transit peptide spans 1 to 40 (MDRIASATFSCPAISLSRVCRISPFGLNIKTNHRKRFSCR).

This sequence belongs to the PAP/fibrillin family.

The protein resides in the plastid. Its subcellular location is the chloroplast. The protein localises to the plastoglobule. This chain is Probable plastid-lipid-associated protein 10, chloroplastic (PAP10), found in Arabidopsis thaliana (Mouse-ear cress).